Here is a 227-residue protein sequence, read N- to C-terminus: AN1-type zinc finger protein 3 (227 aa).

Residues 12 to 44 (PSLPPRCPCGFWGSSKTMNLCSKCFADFQKKQP) form an A20-type zinc finger. Cys-18, Cys-20, Cys-32, and Cys-35 together coordinate Zn(2+). Disordered regions lie at residues 41-100 (KKQP…EECG) and 113-148 (PTKR…ETSR). The segment covering 49–59 (APSTSNSQSDL) has biased composition (polar residues). The segment covering 66 to 77 (SDNNNTSITTPT) has biased composition (low complexity). Polar residues-rich tracts occupy residues 78–94 (LSPS…VTSP) and 113–127 (PTKR…SENE). A compositionally biased stretch (basic and acidic residues) spans 135-148 (RLLENTERSEETSR). The segment at 151-200 (QKSRRRCFQCQTKLELVQQELGSCRCGYVFCMLHRLPEQHDCTFDHMGRG) adopts an AN1-type zinc-finger fold. Zn(2+) contacts are provided by Cys-157, Cys-160, Cys-174, Cys-176, Cys-181, His-184, His-190, and Cys-192.

In Homo sapiens (Human), this protein is AN1-type zinc finger protein 3 (ZFAND3).